The primary structure comprises 32 residues: Conotoxin pr6d (32 aa).

At P5 the chain carries 4-hydroxyproline. 3 cysteine pairs are disulfide-bonded: C7-C20, C14-C25, and C19-C30.

As to expression, expressed by the venom duct.

The protein resides in the secreted. In Conus parius (Cone snail), this protein is Conotoxin pr6d.